The following is a 293-amino-acid chain: MSKFGVLVMGPAGAGKSTFCSALIQHLQTTRRSCFYVNLDPAAESFNYEPDLDIRELITLEDVMEEMELGPNGGLIYCFEFLLQNLDFLSQALDPLSEEYLIIFDMPGQIELYTHIPLLPSLVQYLSRQGPLNINLCAAYLLESTFVIDKAKFFAGTLSAMSAMLMLEMPHVNILSKMDQVRDMVSRKELKRFVNVDVNLLQDEIGGAEEPVEGDPSSKDTLLSGRSFKRLNRAVGQLIDDFSMVSFLKLDVQDEDSVAAVLSHIDDAIQFHEAQEPREPNDEQDVDYEDADI.

13–18 (GAGKST) contributes to the GTP binding site. A Gly-Pro-Asn (GPN)-loop; involved in dimer interface motif is present at residues 70-72 (GPN). 176–179 (SKMD) lines the GTP pocket. Residues 272–281 (HEAQEPREPN) show a composition bias toward basic and acidic residues. Residues 272-293 (HEAQEPREPNDEQDVDYEDADI) form a disordered region. Over residues 282–293 (DEQDVDYEDADI) the composition is skewed to acidic residues.

This sequence belongs to the GPN-loop GTPase family. As to quaternary structure, heterodimers with gpn1 or gpn2. Binds to RNA polymerase II (RNAPII).

Functionally, small GTPase required for proper nuclear import of RNA polymerase II and III (RNAPII and RNAPIII). May act at an RNAP assembly step prior to nuclear import. The polypeptide is GPN-loop GTPase 3 (Aspergillus fumigatus (strain ATCC MYA-4609 / CBS 101355 / FGSC A1100 / Af293) (Neosartorya fumigata)).